The chain runs to 103 residues: UPF0145 protein PTH_2690 (103 aa).

It belongs to the UPF0145 family.

This Pelotomaculum thermopropionicum (strain DSM 13744 / JCM 10971 / SI) protein is UPF0145 protein PTH_2690.